A 903-amino-acid chain; its full sequence is Protein translocase subunit SecA (903 aa).

ATP-binding positions include Gln89, 107–111 (GEGKT), and Asp502. Cys887, Cys889, Cys898, and His899 together coordinate Zn(2+).

The protein belongs to the SecA family. In terms of assembly, monomer and homodimer. Part of the essential Sec protein translocation apparatus which comprises SecA, SecYEG and auxiliary proteins SecDF-YajC and YidC. Zn(2+) is required as a cofactor.

It is found in the cell inner membrane. The protein localises to the cytoplasm. It catalyses the reaction ATP + H2O + cellular proteinSide 1 = ADP + phosphate + cellular proteinSide 2.. Part of the Sec protein translocase complex. Interacts with the SecYEG preprotein conducting channel. Has a central role in coupling the hydrolysis of ATP to the transfer of proteins into and across the cell membrane, serving both as a receptor for the preprotein-SecB complex and as an ATP-driven molecular motor driving the stepwise translocation of polypeptide chains across the membrane. This chain is Protein translocase subunit SecA, found in Jannaschia sp. (strain CCS1).